We begin with the raw amino-acid sequence, 227 residues long: MAYSFQLGLQDATSPIMEELMNFHDHTLMIVFLISSLVLYIISLMLTTKLTHTSTMDAQEVETIWTILPAVILIMIALPSLRILYMMDEINNPVLTVKTMGHQWYWSYEYTDYEDLCFDSYMIPTNDLKPGELRLLEVDNRVVLPMELPIRMLVSSEDVLHSWAVPSLGLKTDAIPGRLNQATVTSNRPGLFYGQCSEICGSNHSFMPIVLEMVPLKHFENWSASMI.

At Met1–Ser14 the chain is on the mitochondrial intermembrane side. The helical transmembrane segment at Pro15–Met45 threads the bilayer. Over Leu46–Gln59 the chain is Mitochondrial matrix. A helical transmembrane segment spans residues Glu60–Met87. Over Asp88–Ile227 the chain is Mitochondrial intermembrane. Residues His161, Cys196, Glu198, Cys200, His204, and Met207 each contribute to the Cu cation site. Glu198 contacts Mg(2+).

This sequence belongs to the cytochrome c oxidase subunit 2 family. Component of the cytochrome c oxidase (complex IV, CIV), a multisubunit enzyme composed of 14 subunits. The complex is composed of a catalytic core of 3 subunits MT-CO1, MT-CO2 and MT-CO3, encoded in the mitochondrial DNA, and 11 supernumerary subunits COX4I, COX5A, COX5B, COX6A, COX6B, COX6C, COX7A, COX7B, COX7C, COX8 and NDUFA4, which are encoded in the nuclear genome. The complex exists as a monomer or a dimer and forms supercomplexes (SCs) in the inner mitochondrial membrane with NADH-ubiquinone oxidoreductase (complex I, CI) and ubiquinol-cytochrome c oxidoreductase (cytochrome b-c1 complex, complex III, CIII), resulting in different assemblies (supercomplex SCI(1)III(2)IV(1) and megacomplex MCI(2)III(2)IV(2)). Found in a complex with TMEM177, COA6, COX18, COX20, SCO1 and SCO2. Interacts with TMEM177 in a COX20-dependent manner. Interacts with COX20. Interacts with COX16. Cu cation is required as a cofactor.

It is found in the mitochondrion inner membrane. The enzyme catalyses 4 Fe(II)-[cytochrome c] + O2 + 8 H(+)(in) = 4 Fe(III)-[cytochrome c] + 2 H2O + 4 H(+)(out). Component of the cytochrome c oxidase, the last enzyme in the mitochondrial electron transport chain which drives oxidative phosphorylation. The respiratory chain contains 3 multisubunit complexes succinate dehydrogenase (complex II, CII), ubiquinol-cytochrome c oxidoreductase (cytochrome b-c1 complex, complex III, CIII) and cytochrome c oxidase (complex IV, CIV), that cooperate to transfer electrons derived from NADH and succinate to molecular oxygen, creating an electrochemical gradient over the inner membrane that drives transmembrane transport and the ATP synthase. Cytochrome c oxidase is the component of the respiratory chain that catalyzes the reduction of oxygen to water. Electrons originating from reduced cytochrome c in the intermembrane space (IMS) are transferred via the dinuclear copper A center (CU(A)) of subunit 2 and heme A of subunit 1 to the active site in subunit 1, a binuclear center (BNC) formed by heme A3 and copper B (CU(B)). The BNC reduces molecular oxygen to 2 water molecules using 4 electrons from cytochrome c in the IMS and 4 protons from the mitochondrial matrix. In Praomys jacksoni (African forest rat), this protein is Cytochrome c oxidase subunit 2 (MT-CO2).